We begin with the raw amino-acid sequence, 555 residues long: Glutamate--tRNA ligase (555 aa).

Positions 100–110 (PNPSGPLHIGH) match the 'HIGH' region motif.

It belongs to the class-I aminoacyl-tRNA synthetase family. Glutamate--tRNA ligase type 2 subfamily.

The protein localises to the cytoplasm. It catalyses the reaction tRNA(Glu) + L-glutamate + ATP = L-glutamyl-tRNA(Glu) + AMP + diphosphate. Functionally, catalyzes the attachment of glutamate to tRNA(Glu) in a two-step reaction: glutamate is first activated by ATP to form Glu-AMP and then transferred to the acceptor end of tRNA(Glu). In Methanococcus maripaludis (strain C6 / ATCC BAA-1332), this protein is Glutamate--tRNA ligase.